Reading from the N-terminus, the 248-residue chain is tRNA pseudouridine synthase A (248 aa).

Catalysis depends on aspartate 53, which acts as the Nucleophile. A substrate-binding site is contributed by tyrosine 111.

The protein belongs to the tRNA pseudouridine synthase TruA family. Homodimer.

It carries out the reaction uridine(38/39/40) in tRNA = pseudouridine(38/39/40) in tRNA. In terms of biological role, formation of pseudouridine at positions 38, 39 and 40 in the anticodon stem and loop of transfer RNAs. The sequence is that of tRNA pseudouridine synthase A from Listeria monocytogenes serotype 4a (strain HCC23).